The sequence spans 228 residues: Phosphoribosylformylglycinamidine synthase subunit PurQ (228 aa).

The Glutamine amidotransferase type-1 domain occupies 3-226; it reads FAVIVFPGSN…VKYWRETHVV (224 aa). The active-site Nucleophile is C86. Active-site residues include H195 and E197.

In terms of assembly, part of the FGAM synthase complex composed of 1 PurL, 1 PurQ and 2 PurS subunits.

The protein resides in the cytoplasm. The catalysed reaction is N(2)-formyl-N(1)-(5-phospho-beta-D-ribosyl)glycinamide + L-glutamine + ATP + H2O = 2-formamido-N(1)-(5-O-phospho-beta-D-ribosyl)acetamidine + L-glutamate + ADP + phosphate + H(+). It catalyses the reaction L-glutamine + H2O = L-glutamate + NH4(+). It participates in purine metabolism; IMP biosynthesis via de novo pathway; 5-amino-1-(5-phospho-D-ribosyl)imidazole from N(2)-formyl-N(1)-(5-phospho-D-ribosyl)glycinamide: step 1/2. Its function is as follows. Part of the phosphoribosylformylglycinamidine synthase complex involved in the purines biosynthetic pathway. Catalyzes the ATP-dependent conversion of formylglycinamide ribonucleotide (FGAR) and glutamine to yield formylglycinamidine ribonucleotide (FGAM) and glutamate. The FGAM synthase complex is composed of three subunits. PurQ produces an ammonia molecule by converting glutamine to glutamate. PurL transfers the ammonia molecule to FGAR to form FGAM in an ATP-dependent manner. PurS interacts with PurQ and PurL and is thought to assist in the transfer of the ammonia molecule from PurQ to PurL. This is Phosphoribosylformylglycinamidine synthase subunit PurQ from Geobacillus sp. (strain WCH70).